The primary structure comprises 97 residues: C-C motif chemokine 7 (97 aa).

Positions 1-23 are cleaved as a signal peptide; that stretch reads MRISATLLCLLLIAAAFSIQVWA. The residue at position 24 (glutamine 24) is a Pyrrolidone carboxylic acid. Asparagine 29 is a glycosylation site (N-linked (GlcNAc...) asparagine). Cystine bridges form between cysteine 33–cysteine 57 and cysteine 34–cysteine 73.

The protein belongs to the intercrine beta (chemokine CC) family. Monomer. Interacts with TNFAIP6 (via Link domain).

Its subcellular location is the secreted. Its function is as follows. Chemotactic factor that attracts monocytes and eosinophils, but not neutrophils. Augments monocyte anti-tumor activity. In Mus musculus (Mouse), this protein is C-C motif chemokine 7 (Ccl7).